The primary structure comprises 494 residues: Alpha-amylase-related protein (494 aa).

The N-terminal stretch at 1 to 20 (MIKFALALTLCLAGASLSLA) is a signal peptide. Gln-21 is subject to Pyrrolidone carboxylic acid. A disulfide bridge connects residues Cys-48 and Cys-104. Residues Asn-118, Gln-169, and Asp-178 each contribute to the Ca(2+) site. A disulfide bridge links Cys-157 with Cys-171. Arg-206 contributes to the chloride binding site. The Nucleophile role is filled by Asp-208. His-212 contacts Ca(2+). Glu-245 functions as the Proton donor in the catalytic mechanism. Chloride is bound by residues Asn-308 and Arg-343. Disulfide bonds link Cys-376–Cys-382, Cys-418–Cys-441, and Cys-448–Cys-460.

This sequence belongs to the glycosyl hydrolase 13 family. In terms of assembly, monomer. It depends on Ca(2+) as a cofactor. Chloride is required as a cofactor.

The protein localises to the secreted. It catalyses the reaction Endohydrolysis of (1-&gt;4)-alpha-D-glucosidic linkages in polysaccharides containing three or more (1-&gt;4)-alpha-linked D-glucose units.. The polypeptide is Alpha-amylase-related protein (Amyrel) (Drosophila serrata (Fruit fly)).